A 323-amino-acid polypeptide reads, in one-letter code: MKSFTLTTLAALAGNAAAHATFQALWVDGVDYGAQCARLPASNSPVTDVTSNAIRCNANPSPARGKCPVKAGSTVTVEMHQQPGDRSCSSEAIGGAHYGPVMVYMSKVSDAASADGSSGWFKVFEDGWAKNPSGGSGDDDYWGTKDLNSCCGKMNVKIPADLPSGDYLLRAEALALHTAGSAGGAQFYMTCYQLTVTGSGSASPPTVSFPGAYKATDPGILVNIHAPLSGYTVPGPAVYSGGSTKKAGSACTGCESTCAVGSGPTATVSQSPGSTATSAPGGGGGCTVQKYQQCGGQGYTGCTNCASGSTCSAVSPPYYSQCV.

The signal sequence occupies residues 1 to 18 (MKSFTLTTLAALAGNAAA). Cu(2+) contacts are provided by histidine 19 and histidine 97. Residues cysteine 56 and cysteine 191 are joined by a disulfide bond. Histidine 177 and glutamine 186 together coordinate O2. Residue tyrosine 188 participates in Cu(2+) binding. The CBM1 domain maps to 286 to 323 (CTVQKYQQCGGQGYTGCTNCASGSTCSAVSPPYYSQCV).

Belongs to the polysaccharide monooxygenase AA9 family. The cofactor is Cu(2+).

It is found in the secreted. It carries out the reaction [(1-&gt;4)-beta-D-glucosyl]n+m + reduced acceptor + O2 = 4-dehydro-beta-D-glucosyl-[(1-&gt;4)-beta-D-glucosyl]n-1 + [(1-&gt;4)-beta-D-glucosyl]m + acceptor + H2O.. Its activity is regulated as follows. Is able to utilize various natural phenolic compounds as reducing agents. Most of these reducing agents are present in plants, either free or as lignin building blocks, such as sinapic acid, or as flavonoids such as catechin and dopamine. Phenolic compounds with 1,2-benzenediol and 1,2,3-benzenetriol moieties yield the highest release of oxidized and non-oxidized glucooligosaccharides from cellulose compared to monophenols or sulfur-containing compounds. In terms of biological role, lytic polysaccharide monooxygenase (LPMO) that depolymerizes crystalline and amorphous polysaccharides via the oxidation of scissile alpha- or beta-(1-4)-glycosidic bonds, yielding C1 oxidation products. Catalysis by LPMOs requires the reduction of the active-site copper from Cu(II) to Cu(I) by a reducing agent and H(2)O(2) or O(2) as a cosubstrate. Is active on regenerated amorphous cellulose (RAC). This chain is AA9 family lytic polysaccharide monooxygenase B, found in Thermothelomyces thermophilus (strain ATCC 42464 / BCRC 31852 / DSM 1799) (Sporotrichum thermophile).